The sequence spans 542 residues: Protein lin-9 homolog (542 aa).

N-acetylalanine is present on Ala2. The segment at 2-296 is sufficient for interaction with RB1; sequence AELDQLPDES…QKQRPSRFFM (295 aa). Lys21 is covalently cross-linked (Glycyl lysine isopeptide (Lys-Gly) (interchain with G-Cter in SUMO2)). Residues Ser65 and Ser95 each carry the phosphoserine modification. Phosphothreonine occurs at positions 96 and 304. Residues Ser309 and Ser321 each carry the phosphoserine modification. Positions 355 to 413 form a coiled coil; that stretch reads IKKEHIKKLREMNTDAEKLKSYSMPISIEFQRRYATIVLELEQLNKDLNKVLHKVQQYC.

It belongs to the lin-9 family. Component of the DREAM complex (also named LINC complex) at least composed of E2F4, E2F5, LIN9, LIN37, LIN52, LIN54, MYBL1, MYBL2, RBL1, RBL2, RBBP4, TFDP1 and TFDP2. The complex exists in quiescent cells where it represses cell cycle-dependent genes. It dissociates in S phase when LIN9, LIN37, LIN52 and LIN54 form a subcomplex that binds to MYBL2. Interacts with RB1.

It is found in the nucleus. The protein localises to the nucleoplasm. Acts as a tumor suppressor. Inhibits DNA synthesis. Its ability to inhibit oncogenic transformation is mediated through its association with RB1. Plays a role in the expression of genes required for the G1/S transition. In Macaca fascicularis (Crab-eating macaque), this protein is Protein lin-9 homolog (LIN9).